The following is a 278-amino-acid chain: WIMGHMVNAVKQIPTFLNDGANAIEADITFKGAVPTYSYHGTPCDFGRVCIRWEYFDVFLQTLRDYTTPGNSKYYEKFILFVLDLKTGSLNNNEVRKAGENVAKGLLKNYWNNGNNGGRAYVVLSLPDIAHYEFIRTFKEVLKAEGHENLLDKVGYDLSGPYLPSLPSLDSVHEAFKKAGVDGHVWLSDGLTNWAPLGDMARLKEIVKRRDSENGFISKVYYWFVDKYSTTRTALDVGVDGIMTNFPYVIIDVLNESGYKDKYRLATYDDNPWETFKK.

Residue His-5 is part of the active site. Residues Glu-25 and Asp-27 each coordinate Mg(2+). Catalysis depends on His-40, which acts as the Nucleophile. Cys-44 and Cys-50 are disulfide-bonded. Mg(2+) is bound at residue Asp-84.

Belongs to the arthropod phospholipase D family. Class I subfamily. Mg(2+) is required as a cofactor. Expressed by the venom gland.

The protein resides in the secreted. The catalysed reaction is an N-(acyl)-sphingosylphosphocholine = an N-(acyl)-sphingosyl-1,3-cyclic phosphate + choline. It catalyses the reaction an N-(acyl)-sphingosylphosphoethanolamine = an N-(acyl)-sphingosyl-1,3-cyclic phosphate + ethanolamine. It carries out the reaction a 1-acyl-sn-glycero-3-phosphocholine = a 1-acyl-sn-glycero-2,3-cyclic phosphate + choline. The enzyme catalyses a 1-acyl-sn-glycero-3-phosphoethanolamine = a 1-acyl-sn-glycero-2,3-cyclic phosphate + ethanolamine. In terms of biological role, dermonecrotic toxins cleave the phosphodiester linkage between the phosphate and headgroup of certain phospholipids (sphingolipid and lysolipid substrates), forming an alcohol (often choline) and a cyclic phosphate. This toxin acts on sphingomyelin (SM). It may also act on ceramide phosphoethanolamine (CPE), lysophosphatidylcholine (LPC) and lysophosphatidylethanolamine (LPE), but not on lysophosphatidylserine (LPS), and lysophosphatidylglycerol (LPG). It acts by transphosphatidylation, releasing exclusively cyclic phosphate products as second products. Induces dermonecrosis, hemolysis, increased vascular permeability, edema, inflammatory response, and platelet aggregation. The polypeptide is Dermonecrotic toxin LlSicTox-alphaIII3iii (Loxosceles laeta (South American recluse spider)).